A 228-amino-acid chain; its full sequence is MKFLSIISLAVSLVAAAPVEVGLDTGVANLEARQSSTRNELESGSSSNCPKVIYIFARASTEPGNMGISAGPIVADALESRYGASQVWVQGVGGPYSADLASNFIIPEGTSRVAINEAKRLFTLANTKCPNSAVVAGGYSQGTAVMASSISELSSTIQNQIKGVVLSAITKNLQNLGRIPNFSTSKTEVYCALADAVCYGTLFILPAHFLYQADAATSAPRFLAARIG.

An N-terminal signal peptide occupies residues 1–16 (MKFLSIISLAVSLVAA). Residues Cys-49 and Cys-129 are joined by a disulfide bond. Ser-140 (nucleophile) is an active-site residue. A disulfide bridge links Cys-191 with Cys-198. Residue Asp-195 is part of the active site. His-208 acts as the Proton donor/acceptor in catalysis.

The protein belongs to the cutinase family. In terms of processing, the 2 disulfide bonds play a critical role in holding the catalytic residues in juxta-position; reduction of the disulfide bridges results in the complete inactivation of the enzyme.

The protein localises to the secreted. It carries out the reaction cutin + H2O = cutin monomers.. Its activity is regulated as follows. Partially inhibited by berberine; higher inhibitory effects are observed with longer chain polyester substrates. Catalyzes the hydrolysis of complex carboxylic polyesters found in the cell wall of plants. Degrades cutin, a macromolecule that forms the structure of the plant cuticle. Allows pathogenic fungi to penetrate through the cuticular barrier into the host plant during the initial stage of fungal infection. The protein is Cutinase (CUTA) of Colletotrichum truncatum (Anthracnose fungus).